A 178-amino-acid chain; its full sequence is MFIDKIKAKANNNEINVIIEIPMNSGPIKYEFDKESGAIFVDRFMQTTMSYPCNYGFIPDTLSNDGDPVDVLVVAHHPVVPGSVIKCRAIGVLMMEDESGLDEKIIAVPTSKLDITFDHIQELDDLCKMLKKRIVHFFEHYKDLEKDKWVKVTGWGNKVKAEDLIKEGIDRNQQKWNN.

Residues Lys29, Arg43, and Tyr55 each coordinate substrate. Mg(2+)-binding residues include Asp65, Asp70, and Asp102. A substrate-binding site is contributed by Tyr141.

Belongs to the PPase family. Homohexamer. Requires Mg(2+) as cofactor.

It localises to the cytoplasm. It catalyses the reaction diphosphate + H2O = 2 phosphate + H(+). In terms of biological role, catalyzes the hydrolysis of inorganic pyrophosphate (PPi) forming two phosphate ions. This chain is Inorganic pyrophosphatase, found in Rickettsia typhi (strain ATCC VR-144 / Wilmington).